The chain runs to 264 residues: 3-methyl-2-oxobutanoate hydroxymethyltransferase (264 aa).

The Mg(2+) site is built by Asp45 and Asp84. Residues Asp45–Ser46, Asp84, and Lys112 each bind 3-methyl-2-oxobutanoate. A Mg(2+)-binding site is contributed by Glu114. Residue Glu181 is the Proton acceptor of the active site.

The protein belongs to the PanB family. In terms of assembly, homodecamer; pentamer of dimers. Mg(2+) is required as a cofactor.

It is found in the cytoplasm. The catalysed reaction is 3-methyl-2-oxobutanoate + (6R)-5,10-methylene-5,6,7,8-tetrahydrofolate + H2O = 2-dehydropantoate + (6S)-5,6,7,8-tetrahydrofolate. The protein operates within cofactor biosynthesis; (R)-pantothenate biosynthesis; (R)-pantoate from 3-methyl-2-oxobutanoate: step 1/2. Catalyzes the reversible reaction in which hydroxymethyl group from 5,10-methylenetetrahydrofolate is transferred onto alpha-ketoisovalerate to form ketopantoate. The chain is 3-methyl-2-oxobutanoate hydroxymethyltransferase from Shewanella piezotolerans (strain WP3 / JCM 13877).